A 354-amino-acid chain; its full sequence is MKFVDEVKIHVKAGDGGDGAVAWRREKFIPRGGPAGGDGGNGGDVVLEVDPQLSTLLDYRYIREHKARNGEKGSGSDMNGKDGADLVLRVPPGTVVKDAATGEQLCDLGTAGERVVIAKGGRGGLGNMNFASSTNQAPRYAEDGTPGAERDLVLELKLLADVGIVGYPNAGKSTLISRISRARPKIADYPFTTLTPNLGVVGWRERSFVVADIPGLIEGAHAGAGLGHQFLRHVERCRVLIHLVEGANPEPGRAPKADLDAINAELAAYSDELAKKPQIVAVTKIDVPEARAAGVKLQKLLGRRKKPVPVHLVSAVTGEGLDALLDAVGRALFKEARPHRGGGGKKLAKPRARA.

Positions Met-1–Leu-159 constitute an Obg domain. The region spanning Ala-160–Phe-333 is the OBG-type G domain. Residues Gly-166–Ser-173, Phe-191–Thr-195, Asp-212–Gly-215, Thr-283–Asp-286, and Ser-314–Val-316 contribute to the GTP site. Residues Ser-173 and Thr-193 each coordinate Mg(2+).

It belongs to the TRAFAC class OBG-HflX-like GTPase superfamily. OBG GTPase family. In terms of assembly, monomer. The cofactor is Mg(2+).

The protein localises to the cytoplasm. Functionally, an essential GTPase which binds GTP, GDP and possibly (p)ppGpp with moderate affinity, with high nucleotide exchange rates and a fairly low GTP hydrolysis rate. Plays a role in control of the cell cycle, stress response, ribosome biogenesis and in those bacteria that undergo differentiation, in morphogenesis control. The chain is GTPase Obg from Anaeromyxobacter dehalogenans (strain 2CP-C).